We begin with the raw amino-acid sequence, 102 residues long: RNA-binding protein Hfq (102 aa).

The 60-residue stretch at 9–68 (DPFLNALRRERVPVSIYLVNGIKLQGQIESFDQFVILLKNTVSQMVYKHAISTVVPSRPV) folds into the Sm domain. A disordered region spans residues 63-102 (VPSRPVSHHSNNAGGGTSSNYHHGSSAQGTSAQQDSEETE). A compositionally biased stretch (polar residues) spans 70–96 (HHSNNAGGGTSSNYHHGSSAQGTSAQQ).

The protein belongs to the Hfq family. As to quaternary structure, homohexamer.

Its function is as follows. RNA chaperone that binds small regulatory RNA (sRNAs) and mRNAs to facilitate mRNA translational regulation in response to envelope stress, environmental stress and changes in metabolite concentrations. Also binds with high specificity to tRNAs. The chain is RNA-binding protein Hfq from Citrobacter koseri (strain ATCC BAA-895 / CDC 4225-83 / SGSC4696).